The following is a 410-amino-acid chain: MKIMSVNSGSSSLKFQLLEMPQQEVIVSVLFERIGSNQAVLTMKTKDKKDKQVLEVPNHQTAVELLLDALIQKKVINALEEIEGVGHRVVQGGEIFSDSAVLTEKTLAQIESLCDLAPLHNPANIISIKAFQKVLPQTFQVAVFDTTFHQSMPAVNFLYATPYYWYQKYQIRKYGAHGTSYKYVTEQMQQILAKDNAKIIICHAGNGVSLCAVDSGKSVDTSMGFTPLEGVPMGTRSGNIDPAVVKFISEKENKTVACVIDDLNKKSGYLGVSGISNDTRDILASIKEGNQQAILSHDIQVKRIVDYIASYYVLLKGIDALVFTAGIGENSSFFRSEIIKRLSVLGIKLDEEKNKVKGKQELITTPDSTIKAFVIPTNEELAIAQDVLRLKQNKTNQYKDDQQECFCFCG.

Asn-7 is a Mg(2+) binding site. Lys-14 is an ATP binding site. Arg-88 contacts substrate. Catalysis depends on Asp-145, which acts as the Proton donor/acceptor. ATP is bound by residues 203 to 207 (HAGNG), 278 to 280 (DTR), and 326 to 330 (GIGEN). A Mg(2+)-binding site is contributed by Glu-379.

This sequence belongs to the acetokinase family. As to quaternary structure, homodimer. It depends on Mg(2+) as a cofactor. Mn(2+) is required as a cofactor.

Its subcellular location is the cytoplasm. It catalyses the reaction acetate + ATP = acetyl phosphate + ADP. Its pathway is metabolic intermediate biosynthesis; acetyl-CoA biosynthesis; acetyl-CoA from acetate: step 1/2. Catalyzes the formation of acetyl phosphate from acetate and ATP. Can also catalyze the reverse reaction. The sequence is that of Acetate kinase from Aster yellows witches'-broom phytoplasma (strain AYWB).